Reading from the N-terminus, the 254-residue chain is Thiazole synthase (254 aa).

K95 functions as the Schiff-base intermediate with DXP in the catalytic mechanism. 1-deoxy-D-xylulose 5-phosphate contacts are provided by residues G156, A182–G183, and N204–T205.

Belongs to the ThiG family. As to quaternary structure, homotetramer. Forms heterodimers with either ThiH or ThiS.

The protein resides in the cytoplasm. The catalysed reaction is [ThiS sulfur-carrier protein]-C-terminal-Gly-aminoethanethioate + 2-iminoacetate + 1-deoxy-D-xylulose 5-phosphate = [ThiS sulfur-carrier protein]-C-terminal Gly-Gly + 2-[(2R,5Z)-2-carboxy-4-methylthiazol-5(2H)-ylidene]ethyl phosphate + 2 H2O + H(+). It participates in cofactor biosynthesis; thiamine diphosphate biosynthesis. Catalyzes the rearrangement of 1-deoxy-D-xylulose 5-phosphate (DXP) to produce the thiazole phosphate moiety of thiamine. Sulfur is provided by the thiocarboxylate moiety of the carrier protein ThiS. In vitro, sulfur can be provided by H(2)S. In Shewanella putrefaciens (strain CN-32 / ATCC BAA-453), this protein is Thiazole synthase.